Here is a 460-residue protein sequence, read N- to C-terminus: NADH-ubiquinone oxidoreductase chain 4 (460 aa).

Transmembrane regions (helical) follow at residues 22–42, 59–79, 93–113, 114–134, 148–168, 195–215, 225–245, 258–278, 286–306, 310–330, 351–371, 394–414, and 440–460; these read WLWP…LLWF, IDPL…LMIL, QRIY…AFSA, TELI…LIII, TYFL…LLLM, FWWT…GVHL, PIAG…YGMM, MAYP…SICL, LIAY…MIQT, FAGA…LFCL, VMLP…LALP, ILLT…MFLM, and LHLI…GWTF.

It belongs to the complex I subunit 4 family.

Its subcellular location is the mitochondrion membrane. It carries out the reaction a ubiquinone + NADH + 5 H(+)(in) = a ubiquinol + NAD(+) + 4 H(+)(out). In terms of biological role, core subunit of the mitochondrial membrane respiratory chain NADH dehydrogenase (Complex I) that is believed to belong to the minimal assembly required for catalysis. Complex I functions in the transfer of electrons from NADH to the respiratory chain. The immediate electron acceptor for the enzyme is believed to be ubiquinone. The sequence is that of NADH-ubiquinone oxidoreductase chain 4 (MT-ND4) from Squalus acanthias (Spiny dogfish).